Consider the following 362-residue polypeptide: Chorismate synthase (362 aa).

Residues arginine 48 and arginine 54 each coordinate NADP(+). FMN-binding positions include 131-133 (RSS), 243-244 (NA), glycine 287, 302-306 (KPTSS), and arginine 328.

It belongs to the chorismate synthase family. In terms of assembly, homotetramer. FMNH2 serves as cofactor.

It carries out the reaction 5-O-(1-carboxyvinyl)-3-phosphoshikimate = chorismate + phosphate. It functions in the pathway metabolic intermediate biosynthesis; chorismate biosynthesis; chorismate from D-erythrose 4-phosphate and phosphoenolpyruvate: step 7/7. Its function is as follows. Catalyzes the anti-1,4-elimination of the C-3 phosphate and the C-6 proR hydrogen from 5-enolpyruvylshikimate-3-phosphate (EPSP) to yield chorismate, which is the branch point compound that serves as the starting substrate for the three terminal pathways of aromatic amino acid biosynthesis. This reaction introduces a second double bond into the aromatic ring system. The polypeptide is Chorismate synthase (Rhodopseudomonas palustris (strain TIE-1)).